A 425-amino-acid chain; its full sequence is MPLLWLRGFLLASCWIIVRSSPTPGSEGHSAAPDCPSCALATLPKDVPNSQPEMVEAVKKHILNMLHLKKRPDVTQPVPKAALLNAIRKLHVGKVGENGYVEIEDDIGRRAEMNELMEQTSEIITFAESGTARKTLHFEISKEGSDLSVVERAEIWLFLKVPKANRTRSKVTIRLFQQQKHLQGSLDAGEEAEEVGLKGEKSEMLISEKVVDARKSTWHIFPVSSCIQRLLDQGKSSLDIRIACEQCQETGASLVLLGKKKKKEEEGEGKKRDGEGGAGGDEEKEQSHRPFLMLQARQSEDHPHRRRRRGLECDGKVNICCKKQFFVSFKDIGWNDWIIAPSGYHANYCEGECPSHIAGTSGSSLSFHSTVINHYRMRGHSPFANLKSCCVPTKLRPMSMLYYDDGQNIIKKDIQNMIVEECGCS.

The signal sequence occupies residues 1–20 (MPLLWLRGFLLASCWIIVRS). The propeptide occupies 21 to 309 (SPTPGSEGHS…EDHPHRRRRR (289 aa)). The N-linked (GlcNAc...) asparagine glycan is linked to Asn165. A disordered region spans residues 259–289 (KKKKKEEEGEGKKRDGEGGAGGDEEKEQSHR). The segment covering 263 to 275 (KEEEGEGKKRDGE) has biased composition (basic and acidic residues). 4 disulfides stabilise this stretch: Cys313–Cys321, Cys320–Cys390, Cys349–Cys422, and Cys353–Cys424.

It belongs to the TGF-beta family. In terms of assembly, dimeric, linked by one or more disulfide bonds. Inhibin A is a dimer of alpha/INHA and beta-A/INHBA. Activin A is a homodimer of beta-A/INHBA. Activin AB is a dimer of beta-A/INHBA and beta-B/INHBB. Interacts with FST and FSTL3; these interactions prevent activin A interaction to its type II receptor. Activin A interacts with ACVR2A. Activin A interacts with BMPR2. Inhibin A interacts with ACVR1; this interaction creates a non-signaling complex (NSC) that inhibits ACVR1-mediated BMP signaling. Inhibin A interacts with ACVR2A.

It localises to the secreted. Inhibins/activins are involved in regulating a number of diverse functions such as hypothalamic and pituitary hormone secretion, gonadal hormone secretion, germ cell development and maturation, erythroid differentiation, insulin secretion, nerve cell survival, embryonic axial development or bone growth, depending on their subunit composition. In terms of biological role, activin A is a homodimer of INHBA that plays a role in several essential biological processes including embryonic development, stem cell maintenance and differentiation, haematopoiesis, cell proliferation and tissue fibrosis. Signals through type I (such as ACVR1B or ACVR1C) and type II receptors (such as ACVR2A, ACVR2B or BMPR2) which, upon ligand binding, phosphorylate SMAD2 and SMAD3 intracellular signaling mediators that form a complex with SMAD4, translocate to the nucleus and modulate gene expression. Can also activate alternative non-canonical intracellular signaling pathways including the p38 MAPK, extracellular signal-regulated kinases 1/2 (ERK1/2) and c-Jun N-terminal kinases (JNKs) to modulate cell migration and differentiation. Alternatively, promotes osteoblastic differentiation via ACVRL1-SMAD1/5/9 pathway. In addition, can engage the type I receptor ACVR1 to form an ACVR1-activin A-type II receptor non-signaling complex (NSC) that renders receptors unavailable for engagement with BMPs, hence resulting in an apparent inhibition of ACVR1-mediated BMP signaling. Functionally, inhibin A is a dimer of alpha/INHA and beta-A/INHBA that functions as a feedback regulator in the hypothalamic-pituitary-gonadal (HPG) axis. Inhibits the secretion of FSH from the anterior pituitary gland by acting on pituitary gonadotrope cells. Antagonizes activin A by binding to the proteoglycan, betaglycan, and forming a stable complex with and, thereby, sequestering type II activin receptors while excluding type I receptor. This Bos taurus (Bovine) protein is Inhibin beta A chain (INHBA).